The sequence spans 536 residues: Bifunctional purine biosynthesis protein PurH (536 aa).

Residues 8–158 (IPAPDEVRIQ…KNHAYVTIVT (151 aa)) form the MGS-like domain.

It belongs to the PurH family.

The enzyme catalyses (6R)-10-formyltetrahydrofolate + 5-amino-1-(5-phospho-beta-D-ribosyl)imidazole-4-carboxamide = 5-formamido-1-(5-phospho-D-ribosyl)imidazole-4-carboxamide + (6S)-5,6,7,8-tetrahydrofolate. The catalysed reaction is IMP + H2O = 5-formamido-1-(5-phospho-D-ribosyl)imidazole-4-carboxamide. Its pathway is purine metabolism; IMP biosynthesis via de novo pathway; 5-formamido-1-(5-phospho-D-ribosyl)imidazole-4-carboxamide from 5-amino-1-(5-phospho-D-ribosyl)imidazole-4-carboxamide (10-formyl THF route): step 1/1. It participates in purine metabolism; IMP biosynthesis via de novo pathway; IMP from 5-formamido-1-(5-phospho-D-ribosyl)imidazole-4-carboxamide: step 1/1. This Sinorhizobium fredii (strain NBRC 101917 / NGR234) protein is Bifunctional purine biosynthesis protein PurH.